Reading from the N-terminus, the 990-residue chain is Activator of stress genes protein 1 (990 aa).

Positions 1–88 (MPKREIEDTQ…NKPKSQENKR (88 aa)) are disordered. Positions 9-23 (TQSPYSSTGLVSTGE) are enriched in polar residues. Positions 24–61 (SPKTSTSTPTSSTNNRAATTTTNNTSTTSTSLLKSNSN) are enriched in low complexity. Residues 95 to 121 (CDTCRQKKVKCDGKQPCIHCTVYSYKC) constitute a DNA-binding region (zn(2)-C6 fungal-type). 3 stretches are compositionally biased toward low complexity: residues 160–179 (NNNSSNQQSLQSLQQQQQHV), 282–293 (SFDDSSNSAVSS), and 773–793 (TATTNSTTTTANTNSNSNSNS). Disordered stretches follow at residues 160 to 192 (NNNSSNQQSLQSLQQQQQHVVHQHQHQPLPADE), 255 to 295 (QDPD…SSPR), 764 to 800 (RTASRSRQVTATTNSTTTTANTNSNSNSNSQPTTLPA), and 915 to 944 (SNNNNSNNVNNNFNNNNNAGEVNNNSNGVA).

Belongs to the ASG1 family.

It localises to the nucleus. Its function is as follows. Transcription factor necessary to sustain growth on non-fermentative carbon sources such as sodium acetate, acetic acid, or ethanol. Plays a role in hyphal formation. This chain is Activator of stress genes protein 1 (ASG1), found in Candida albicans (strain SC5314 / ATCC MYA-2876) (Yeast).